Consider the following 278-residue polypeptide: Sulfur carrier protein FdhD (278 aa).

The active-site Cysteine persulfide intermediate is the Cys-121. Residue 260–265 (FCKPGR) coordinates Mo-bis(molybdopterin guanine dinucleotide).

This sequence belongs to the FdhD family.

It is found in the cytoplasm. Its function is as follows. Required for formate dehydrogenase (FDH) activity. Acts as a sulfur carrier protein that transfers sulfur from IscS to the molybdenum cofactor prior to its insertion into FDH. The protein is Sulfur carrier protein FdhD of Salmonella paratyphi A (strain ATCC 9150 / SARB42).